Reading from the N-terminus, the 368-residue chain is Histone macroH2A1.1 (368 aa).

Residues 154-177 (AVSSSSAAASSSSSASSSSSVAPK) are disordered. One can recognise a Macro domain in the interval 184–368 (TILSKKTLHL…VYNAELINTN (185 aa)). Positions 203, 204, 225, 226, 275, 313, 314, 315, 316, and 317 each coordinate a glycoprotein.

Belongs to the histone H2A family. As to quaternary structure, the nucleosome is a histone octamer containing two molecules each of H2A, H2B, H3 and H4 assembled in one H3-H4 heterotetramer and two H2A-H2B heterodimers.

It localises to the nucleus. It is found in the chromosome. Its function is as follows. Variant histone H2A which replaces conventional H2A in a subset of nucleosomes where it represses transcription. Nucleosomes wrap and compact DNA into chromatin, limiting DNA accessibility to the cellular machineries which require DNA as a template. Histones thereby play a central role in transcription regulation, DNA repair, DNA replication and chromosomal stability. DNA accessibility is regulated via a complex set of post-translational modifications of histones, also called histone code, and nucleosome remodeling. Functionally, specifically binds poly-ADP-ribose and plays a key role in NAD(+) metabolism. Able to bind to the ends of poly-ADP-ribose chains created by PARP1 and cap them. This prevents PARP1 from further addition of ADP-ribose and thus limits the consumption of nuclear NAD(+), allowing the cell to maintain proper NAD(+) levels in both the nucleus and the mitochondria to promote proper mitochondrial respiration. The chain is Histone macroH2A1.1 from Capsaspora owczarzaki (strain ATCC 30864).